Here is a 74-residue protein sequence, read N- to C-terminus: RNA-binding protein Hfq (74 aa).

Positions 9-69 (DQFLNQLRKD…ISTFAPEKNV (61 aa)) constitute a Sm domain.

Belongs to the Hfq family. In terms of assembly, homohexamer.

Its function is as follows. RNA chaperone that binds small regulatory RNA (sRNAs) and mRNAs to facilitate mRNA translational regulation in response to envelope stress, environmental stress and changes in metabolite concentrations. Also binds with high specificity to tRNAs. This is RNA-binding protein Hfq from Geobacillus sp. (strain WCH70).